Consider the following 200-residue polypeptide: Ubiquitin-conjugating enzyme E2 K (200 aa).

N-acetylalanine is present on A2. One can recognise a UBC core domain in the interval 4 to 154 (IAVQRIKREF…ARLWAHVYAG (151 aa)). K14 bears the N6-acetyllysine; alternate mark. A Glycyl lysine isopeptide (Lys-Gly) (interchain with G-Cter in SUMO); alternate cross-link involves residue K14. K14 participates in a covalent cross-link: Glycyl lysine isopeptide (Lys-Gly) (interchain with G-Cter in SUMO1); alternate. C92 functions as the Glycyl thioester intermediate in the catalytic mechanism. S159 bears the Phosphoserine mark. In terms of domain architecture, UBA spans 160–200 (PEYTKKIENLCAMGFDRNAVIVALSSKSWDVETATELLLSN).

This sequence belongs to the ubiquitin-conjugating enzyme family. In terms of assembly, interacts with RNF138/NARF. Interacts with BRCA1. In terms of processing, sumoylation at Lys-14 impairs catalytic activity.

The protein resides in the cytoplasm. It catalyses the reaction S-ubiquitinyl-[E1 ubiquitin-activating enzyme]-L-cysteine + [E2 ubiquitin-conjugating enzyme]-L-cysteine = [E1 ubiquitin-activating enzyme]-L-cysteine + S-ubiquitinyl-[E2 ubiquitin-conjugating enzyme]-L-cysteine.. It functions in the pathway protein modification; protein ubiquitination. Accepts ubiquitin from the E1 complex and catalyzes its covalent attachment to other proteins. In vitro, in the presence or in the absence of BRCA1-BARD1 E3 ubiquitin-protein ligase complex, catalyzes the synthesis of 'Lys-48'-linked polyubiquitin chains. Does not transfer ubiquitin directly to but elongates monoubiquitinated substrate protein. Mediates the selective degradation of short-lived and abnormal proteins, such as the endoplasmic reticulum-associated degradation (ERAD) of misfolded lumenal proteins. Ubiquitinates huntingtin. May mediate foam cell formation by the suppression of apoptosis of lipid-bearing macrophages through ubiquitination and subsequence degradation of p53/TP53. Proposed to be involved in ubiquitination and proteolytic processing of NF-kappa-B; in vitro supports ubiquitination of NFKB1. In Bos taurus (Bovine), this protein is Ubiquitin-conjugating enzyme E2 K (UBE2K).